Reading from the N-terminus, the 121-residue chain is Methylglyoxal synthase (121 aa).

The MGS-like domain occupies 1–121 (MMKVALIAHD…SAELFLRALN (121 aa)). Residues H9, K13, 35–38 (TGTT), and 55–56 (SG) each bind substrate. D61 functions as the Proton donor/acceptor in the catalytic mechanism. H88 lines the substrate pocket.

Belongs to the methylglyoxal synthase family.

It carries out the reaction dihydroxyacetone phosphate = methylglyoxal + phosphate. In terms of biological role, catalyzes the formation of methylglyoxal from dihydroxyacetone phosphate. The protein is Methylglyoxal synthase of Carboxydothermus hydrogenoformans (strain ATCC BAA-161 / DSM 6008 / Z-2901).